Here is a 241-residue protein sequence, read N- to C-terminus: Large ribosomal subunit protein uL3 (241 aa).

2 disordered regions span residues 139-166 (VSHR…PGHM) and 209-241 (KKPL…KEGA). Gln151 bears the N5-methylglutamine mark.

This sequence belongs to the universal ribosomal protein uL3 family. Part of the 50S ribosomal subunit. Forms a cluster with proteins L14 and L19. Methylated by PrmB.

In terms of biological role, one of the primary rRNA binding proteins, it binds directly near the 3'-end of the 23S rRNA, where it nucleates assembly of the 50S subunit. The sequence is that of Large ribosomal subunit protein uL3 from Nitrobacter hamburgensis (strain DSM 10229 / NCIMB 13809 / X14).